We begin with the raw amino-acid sequence, 269 residues long: Achromobactin transport ATP-binding protein CbrD (269 aa).

Residues 4–240 (ITSRELTLGY…ALVKTVFNLD (237 aa)) form the ABC transporter domain. 36 to 43 (GSNGCGKS) is an ATP binding site.

The protein belongs to the ABC transporter superfamily.

It localises to the cell inner membrane. Its function is as follows. Part of the binding-protein-dependent transport system CbrABCD for uptake of the siderophore achromobactin. Probably responsible for energy coupling to the transport system. This is Achromobactin transport ATP-binding protein CbrD (cbrD) from Dickeya dadantii (strain 3937) (Erwinia chrysanthemi (strain 3937)).